The primary structure comprises 87 residues: Phosphoribosyl-ATP pyrophosphatase (87 aa).

This sequence belongs to the PRA-PH family.

Its subcellular location is the cytoplasm. The enzyme catalyses 1-(5-phospho-beta-D-ribosyl)-ATP + H2O = 1-(5-phospho-beta-D-ribosyl)-5'-AMP + diphosphate + H(+). It functions in the pathway amino-acid biosynthesis; L-histidine biosynthesis; L-histidine from 5-phospho-alpha-D-ribose 1-diphosphate: step 2/9. The protein is Phosphoribosyl-ATP pyrophosphatase of Leifsonia xyli subsp. xyli (strain CTCB07).